Here is a 613-residue protein sequence, read N- to C-terminus: MTHITLGQAIWASVRPIIKIYLIIGVGFGLCKMNILTVQATRSISDIVLTILLPCLSFNKIVANIEDNDIKDVGIICLTSVILFATGLGFAFIVRSVLPVPKRWRGGILAGGMFPNISDLPIAYLQSMDQGFIFTEAEGEKGVANVIIFLAMFLICVFNLGGFRLIENDFHYKGDDDEENTLTNDDSAQQPTQPIEGNSSSSSNQDILKEPNESTVPNSSQASYISEKNKKEKTELSVPKPTHTAPPAIDDRSSNSSAVVSIDSITHSLRTNHVDAQSVSELNDPTYRTRSQPIAYTTESRTSHVHNNRRNSITGSLRSIDMRELPAEGMSDLIREYSNVDQYGRRRKSSISSQGAPSVLQADGTISPNLTRTSTLQRVKTSNLTRIITSDATVSKKDIETSGSSLPKWLQKFPLTKFFVFFLKNCLRPCSMAVILALIIAFIPWVKALFVTTSNTPKIKQAPDNAPALTFIMDFTSYVGAASVPFGLILLGATLGRLKIGKLYPGFWKSAVVLVFLRQCIMPIFGVLWCDRLVKAGWLNWENDKMLLFVTAITWNLPTMTTLIYFTASYTPEDETEPVQMECTSFFLMLQYPLMVVSLPFLVSYFIKVQMKL.

A run of 4 helical transmembrane segments spans residues 10–30, 74–94, 106–126, and 143–163; these read IWASVRPIIKIYLIIGVGFGL, GIICLTSVILFATGLGFAFIV, GGILAGGMFPNISDLPIAYLQ, and VANVIIFLAMFLICVFNLGGF. Residues 177-256 are disordered; the sequence is DEENTLTNDD…PAIDDRSSNS (80 aa). Composition is skewed to polar residues over residues 187–206 and 213–226; these read SAQQPTQPIEGNSSSSSNQD and ESTVPNSSQASYIS. Residues Ser-291 and Ser-338 each carry the phosphoserine modification. Residues 345-366 form a disordered region; sequence RRRKSSISSQGAPSVLQADGTI. The next 4 membrane-spanning stretches (helical) occupy residues 432-452, 471-491, 546-566, and 587-607; these read MAVILALIIAFIPWVKALFVT, FIMDFTSYVGAASVPFGLILL, MLLFVTAITWNLPTMTTLIYF, and FLMLQYPLMVVSLPFLVSYFI.

The protein localises to the endoplasmic reticulum membrane. Functionally, may be involved in cell wall organization and biogenesis. The protein is Protein ECM3 (ECM3) of Saccharomyces cerevisiae (strain ATCC 204508 / S288c) (Baker's yeast).